Reading from the N-terminus, the 640-residue chain is ETV5-related protein Ets96B (640 aa).

The interval 315-375 (HADSTTTAAQ…HHGHQQAEQQ (61 aa)) is disordered. The stretch at 321–356 (TAAQQQQQQQEQQQQQQQQQQQQQHQQQLQQAAALH) forms a coiled coil. Residues 322–355 (AAQQQQQQQEQQQQQQQQQQQQQHQQQLQQAAAL) are compositionally biased toward low complexity. A compositionally biased stretch (basic residues) spans 356–369 (HPHHHHSHHGHHGH). Residues 498–579 (LQLWQFLVAL…NGERYVYRFV (82 aa)) constitute a DNA-binding region (ETS). A compositionally biased stretch (polar residues) spans 609 to 624 (LAKTPPTSGDSQTQSP). The segment at 609–628 (LAKTPPTSGDSQTQSPRVAK) is disordered.

It belongs to the ETS family. In the adult brain, expressed almost exclusively in dopaminergic neurons.

The protein resides in the nucleus. Functionally, required in dopaminergic neurons to regulate expression of genes involved in dopamine signaling. Decreases expression of the dopamine transporter DAT and increases expression of the dopamine transporter Vmat and the tyrosine 3-monooxygenase ple which is involved in dopamine biosynthesis. Also involved in negatively regulating the expression of a group of endoplasmic reticulum proteins, the molecular chaperone Calr and the protein disulfide isomerases CaBP1 and ERp60. This chain is ETV5-related protein Ets96B, found in Drosophila melanogaster (Fruit fly).